Reading from the N-terminus, the 270-residue chain is MDYYFTKGKPQLVNMKTPIYLVTQFQQLMDLMQNQYEVSCLELMQRSGKAACDFLVYRWPKVKKISIFCGRGDNGGQGYVLAQQAKKMGMVPTVWQVGHQMSMSKPPQMHKEVWYEMNSCHQQGIVLHTYSPDIDLGDPELIVDALFGVGLYGHVRPEIALLLQRLQQFTVPILAIEVPTGINASTGEIAGNALAATATITFLCMKLGLLINDGKIYSGEIAFDDLLAPEAIYQQVKGIEESSLLDSSTIFSKKIWYRNKTQKGWQLSIN.

The YjeF N-terminal domain occupies 25-234; that stretch reads FQQLMDLMQN…DLLAPEAIYQ (210 aa). 73–77 lines the (6S)-NADPHX pocket; that stretch reads DNGGQ. Residues N74 and D144 each contribute to the K(+) site. Residues 148–154 and E177 contribute to the (6S)-NADPHX site; that span reads GVGLYGH. T180 contacts K(+).

It belongs to the NnrE/AIBP family. K(+) serves as cofactor.

The enzyme catalyses (6R)-NADHX = (6S)-NADHX. The catalysed reaction is (6R)-NADPHX = (6S)-NADPHX. Its function is as follows. Catalyzes the epimerization of the S- and R-forms of NAD(P)HX, a damaged form of NAD(P)H that is a result of enzymatic or heat-dependent hydration. This is a prerequisite for the S-specific NAD(P)H-hydrate dehydratase to allow the repair of both epimers of NAD(P)HX. This chain is NAD(P)H-hydrate epimerase, found in Legionella pneumophila (strain Corby).